The chain runs to 97 residues: YcgL domain-containing protein PSPPH_1548 (97 aa).

A YcgL domain is found at 3–87 (RICSIYRSPK…AEDDYIEHLP (85 aa)).

This Pseudomonas savastanoi pv. phaseolicola (strain 1448A / Race 6) (Pseudomonas syringae pv. phaseolicola (strain 1448A / Race 6)) protein is YcgL domain-containing protein PSPPH_1548.